A 137-amino-acid chain; its full sequence is Interferon-induced transmembrane protein 3 (137 aa).

Residues 1 to 57 (MNHTSQAFVNAATGGQPPNYERIKEEYEVSELGAPHGSASVRTTVINMPREVSVPDH) lie on the Cytoplasmic side of the membrane. Tyrosine 20 is modified (phosphotyrosine). Lysine 24 participates in a covalent cross-link: Glycyl lysine isopeptide (Lys-Gly) (interchain with G-Cter in ubiquitin). Position 27 is a phosphotyrosine (tyrosine 27). Positions 58–78 (VVWSLFNTLFMNFCCLGFIAY) form an intramembrane region, helical. The interaction with SPP1 stretch occupies residues 60–93 (WSLFNTLFMNFCCLGFIAYAYSVKSRDRKMVGDM). 2 S-palmitoyl cysteine lipidation sites follow: cysteine 71 and cysteine 72. Over 79–109 (AYSVKSRDRKMVGDMTGAQAYASTAKCLNIS) the chain is Cytoplasmic. Residues lysine 83, lysine 88, and lysine 104 each participate in a glycyl lysine isopeptide (Lys-Gly) (interchain with G-Cter in ubiquitin) cross-link. Cysteine 105 carries the S-palmitoyl cysteine lipid modification. Positions 108-133 (ISSLVLSILMVIITIVTVVIIALNAP) are interaction with VAPA. Residues 110–130 (SLVLSILMVIITIVTVVIIAL) traverse the membrane as a helical segment. Over 131 to 137 (NAPRLQT) the chain is Extracellular.

It belongs to the CD225/Dispanin family. As to quaternary structure, interacts with ATP6V0B. Interacts with CD81. Interacts with SPP1; the interaction reduces OPN expression. Interacts with BRI3. Polyubiquitinated with both 'Lys-48' and 'Lys-63' linkages. Ubiquitination negatively regulates antiviral activity. Lys-24 is the most prevalent ubiquitination site. In terms of processing, phosphorylation at Tyr-20 is required for endosomal and lysosomal location.

It localises to the cell membrane. The protein localises to the late endosome membrane. The protein resides in the early endosome membrane. It is found in the lysosome membrane. Its subcellular location is the cytoplasm. It localises to the perinuclear region. In terms of biological role, IFN-induced antiviral protein which disrupts intracellular cholesterol homeostasis. Inhibits the entry of viruses to the host cell cytoplasm by preventing viral fusion with cholesterol depleted endosomes. May inactivate new enveloped viruses which buds out of the infected cell, by letting them go out with a cholesterol depleted membrane. Active against multiple viruses. Plays a critical role in the structural stability and function of vacuolar ATPase (v-ATPase). Establishes physical contact with the v-ATPase of endosomes which is critical for proper clathrin localization and is also required for the function of the v-ATPase to lower the pH in phagocytic endosomes thus establishing an antiviral state. This chain is Interferon-induced transmembrane protein 3, found in Rattus norvegicus (Rat).